Consider the following 498-residue polypeptide: Pyridine nucleotide-disulfide oxidoreductase domain-containing protein 1 (498 aa).

At M1 the chain carries N-acetylmethionine.

This sequence belongs to the class-I pyridine nucleotide-disulfide oxidoreductase family. PYROXD1 subfamily. FAD is required as a cofactor.

It localises to the nucleus. Its subcellular location is the cytoplasm. The protein localises to the myofibril. The protein resides in the sarcomere. Its function is as follows. Probable FAD-dependent oxidoreductase; involved in the cellular oxidative stress response. Required for normal sarcomere structure and muscle fiber integrity. This Mus musculus (Mouse) protein is Pyridine nucleotide-disulfide oxidoreductase domain-containing protein 1 (Pyroxd1).